Here is a 218-residue protein sequence, read N- to C-terminus: Protein U63 (218 aa).

Belongs to the herpesviridae UL92 family.

The protein is Protein U63 (U63) of Homo sapiens (Human).